Consider the following 1160-residue polypeptide: GPI inositol-deacylase (1160 aa).

The interval M1 to P92 is disordered. Positions G57–P92 are enriched in polar residues. A glycan (N-linked (GlcNAc...) asparagine) is linked at N65. A helical membrane pass occupies residues P120–L140. The active site involves S307. The next 2 membrane-spanning stretches (helical) occupy residues L786–L806 and S832–S852. The N-linked (GlcNAc...) asparagine glycan is linked to N866. 2 helical membrane passes run A886–L906 and I973–I993. Residue N1019 is glycosylated (N-linked (GlcNAc...) asparagine). The next 4 membrane-spanning stretches (helical) occupy residues S1023 to A1043, V1060 to P1080, L1092 to L1112, and L1115 to V1135.

Belongs to the GPI inositol-deacylase family.

The protein localises to the endoplasmic reticulum membrane. Its function is as follows. Involved in inositol deacylation of GPI-anchored proteins which plays important roles in the quality control and ER-associated degradation of GPI-anchored proteins. In Aspergillus terreus (strain NIH 2624 / FGSC A1156), this protein is GPI inositol-deacylase (bst1).